Here is a 230-residue protein sequence, read N- to C-terminus: 3,4-dihydroxy-2-butanone 4-phosphate synthase (230 aa).

Residues 42–43 (RE), aspartate 47, 155–159 (RRGHT), and glutamate 179 contribute to the D-ribulose 5-phosphate site. Position 43 (glutamate 43) interacts with Mg(2+). Histidine 158 contributes to the Mg(2+) binding site.

The protein belongs to the DHBP synthase family. As to quaternary structure, homodimer. Requires Mg(2+) as cofactor. Mn(2+) is required as a cofactor.

The catalysed reaction is D-ribulose 5-phosphate = (2S)-2-hydroxy-3-oxobutyl phosphate + formate + H(+). It functions in the pathway cofactor biosynthesis; riboflavin biosynthesis; 2-hydroxy-3-oxobutyl phosphate from D-ribulose 5-phosphate: step 1/1. Functionally, catalyzes the conversion of D-ribulose 5-phosphate to formate and 3,4-dihydroxy-2-butanone 4-phosphate. The sequence is that of 3,4-dihydroxy-2-butanone 4-phosphate synthase from Bordetella pertussis (strain Tohama I / ATCC BAA-589 / NCTC 13251).